The following is a 121-amino-acid chain: Large ribosomal subunit protein uL18 (121 aa).

It belongs to the universal ribosomal protein uL18 family. As to quaternary structure, part of the 50S ribosomal subunit; part of the 5S rRNA/L5/L18/L25 subcomplex. Contacts the 5S and 23S rRNAs.

This is one of the proteins that bind and probably mediate the attachment of the 5S RNA into the large ribosomal subunit, where it forms part of the central protuberance. The polypeptide is Large ribosomal subunit protein uL18 (Mesomycoplasma hyopneumoniae (strain 232) (Mycoplasma hyopneumoniae)).